A 66-amino-acid chain; its full sequence is Large ribosomal subunit protein uL29 (66 aa).

It belongs to the universal ribosomal protein uL29 family.

This chain is Large ribosomal subunit protein uL29, found in Roseiflexus castenholzii (strain DSM 13941 / HLO8).